Consider the following 413-residue polypeptide: Serine/threonine-protein phosphatase 7 (413 aa).

Cysteines 28 and 67 form a disulfide. Positions 84, 86, 113, and 145 each coordinate Mn(2+). The Proton donor role is filled by H146. Residues H197 and H303 each coordinate Mn(2+). The disordered stretch occupies residues N391–S413. The span at M404 to S413 shows a compositional bias: polar residues.

The protein belongs to the PPP phosphatase family. PP-7 subfamily. In terms of assembly, monomer, homodimer, and heteromer. Interacts with calmodulin (CaM3 and CaM4) and HSFA1A/HSF1. The cofactor is Mn(2+). Expressed in leaves, and, to a lower extent, in stems and flowers.

The protein resides in the nucleus. The protein localises to the nucleoplasm. It catalyses the reaction O-phospho-L-seryl-[protein] + H2O = L-seryl-[protein] + phosphate. The catalysed reaction is O-phospho-L-threonyl-[protein] + H2O = L-threonyl-[protein] + phosphate. With respect to regulation, inhibited by NaF and orthovanadate, as well as by divalent cations such as Ni(2+) and Zn(2+). Inhibited by polylysine with myelin basic protein as substrate, but activated by polylysine with pNPP as substrate. Reversibly regulated by redox agents. Inhibited by submillimolar Pi concentrations. Slightly repressed by calmodulin (CaM). Its function is as follows. Phosphatase active on para-nitrophenylphosphate (pNPP) and on various phosphoproteins such as myelin basic protein. Seems to act as a positive regulator of cryptochrome signaling involved in hypocotyl growth inhibition and cotyledon expansion under white and blue light conditions. Confers thermotolerance. Required for heat shock mediated-signaling pathway that leads to the expression of heat shock proteins (HSPs). The polypeptide is Serine/threonine-protein phosphatase 7 (PP7) (Arabidopsis thaliana (Mouse-ear cress)).